The following is a 460-amino-acid chain: Kynurenine 3-monooxygenase (460 aa).

FAD-binding positions include V13, 32-34 (DFR), and A53. L-kynurenine-binding residues include R83 and Y97. FAD is bound by residues R109, L133, Y195, D314, and 325–328 (QGMN). Residues N373 and Y408 each coordinate L-kynurenine.

It belongs to the aromatic-ring hydroxylase family. KMO subfamily. It depends on FAD as a cofactor.

The protein resides in the mitochondrion outer membrane. It catalyses the reaction L-kynurenine + NADPH + O2 + H(+) = 3-hydroxy-L-kynurenine + NADP(+) + H2O. It participates in cofactor biosynthesis; NAD(+) biosynthesis; quinolinate from L-kynurenine: step 1/3. In terms of biological role, catalyzes the hydroxylation of L-kynurenine (L-Kyn) to form 3-hydroxy-L-kynurenine (L-3OHKyn). Required for synthesis of quinolinic acid. The chain is Kynurenine 3-monooxygenase from Saccharomyces cerevisiae (strain ATCC 204508 / S288c) (Baker's yeast).